Consider the following 553-residue polypeptide: Putative transport protein YidE (553 aa).

Helical transmembrane passes span isoleucine 4 to valine 24, glycine 28 to serine 48, phenylalanine 65 to serine 85, leucine 95 to phenylalanine 115, and methionine 158 to leucine 178. 2 consecutive RCK C-terminal domains span residues glutamine 191–glutamine 276 and aspartate 279–asparagine 361. The next 6 helical transmembrane spans lie at methionine 371–valine 391, glycine 393–leucine 413, isoleucine 439–valine 459, leucine 464–leucine 484, tyrosine 493–alanine 513, and leucine 533–glycine 553.

This sequence belongs to the AAE transporter (TC 2.A.81) family. YidE subfamily.

It localises to the cell membrane. The chain is Putative transport protein YidE from Escherichia coli (strain ATCC 8739 / DSM 1576 / NBRC 3972 / NCIMB 8545 / WDCM 00012 / Crooks).